A 1097-amino-acid chain; its full sequence is Transmembrane protein 132D (1097 aa).

A signal peptide spans 1 to 30 (MCPSEMGTLWYLWSPVLISLAALFSKVTEG). At 31-913 (RGILESIQRF…LDQAAKGLSD (883 aa)) the chain is on the extracellular side. The segment covering 233-245 (DERGDCAKEDSRK) has biased composition (basic and acidic residues). Positions 233 to 263 (DERGDCAKEDSRKSGGTPAGHNDVDESSPPL) are disordered. The helical transmembrane segment at 914 to 934 (LEIGMYALLGVFCLAILVFLI) threads the bilayer. Residues 935 to 1097 (NCVTFALKYR…SCMERLHEHV (163 aa)) are Cytoplasmic-facing. The interval 1021 to 1042 (MLTDDQEQKSEPPTSPTSKRKR) is disordered.

It belongs to the TMEM132 family. Expressed in mature oligodendrocytes in the white and gray matter of the brain.

It localises to the membrane. Regulates neuronal morphology via inhibition of the WAVE regulatory complex (WCR), a complex that controls F-actin cytoskeletal dynamics. This Mus musculus (Mouse) protein is Transmembrane protein 132D (Tmem132d).